The primary structure comprises 278 residues: Urease accessory protein UreD (278 aa).

It belongs to the UreD family. As to quaternary structure, ureD, UreF and UreG form a complex that acts as a GTP-hydrolysis-dependent molecular chaperone, activating the urease apoprotein by helping to assemble the nickel containing metallocenter of UreC. The UreE protein probably delivers the nickel.

Its subcellular location is the cytoplasm. Its function is as follows. Required for maturation of urease via the functional incorporation of the urease nickel metallocenter. The polypeptide is Urease accessory protein UreD (Pseudomonas putida (strain ATCC 700007 / DSM 6899 / JCM 31910 / BCRC 17059 / LMG 24140 / F1)).